Consider the following 548-residue polypeptide: uncharacterized protein (548 aa).

In terms of domain architecture, DhaL spans 8 to 200 (KLFADMIIQG…LLCVYEGFLK (193 aa)).

This is an uncharacterized protein from Staphylococcus aureus (strain MRSA252).